Consider the following 136-residue polypeptide: Ergosterol biosynthetic protein 28 (136 aa).

The next 4 helical transmembrane spans lie at 18 to 34 (VVVSVAALFNTVQSFLT), 56 to 72 (FGIWTLLSAIVRFYCAY), 79 to 95 (VYFLCQCTYYLACFHFL), and 109 to 125 (GLLSPIVVSTVSIWFMA).

It belongs to the ERG28 family. As to quaternary structure, heterotetramer of erg25, erg26, erg27 and erg28. Erg28 acts as a scaffold to tether erg27 and other 4,4-demethylation-related enzymes, forming a demethylation enzyme complex, in the endoplasmic reticulum.

The protein localises to the endoplasmic reticulum membrane. It functions in the pathway steroid metabolism; ergosterol biosynthesis. Functionally, part of the third module of ergosterol biosynthesis pathway that includes by the late steps of the pathway. Erg28 has a role as a scaffold to help anchor the catalytic components of the C-4 demethylation complex erg25, erg26 and erg27 to the endoplasmic reticulum. The third module or late pathway involves the ergosterol synthesis itself through consecutive reactions that mainly occur in the endoplasmic reticulum (ER) membrane. Firstly, the squalene synthase erg9 catalyzes the condensation of 2 farnesyl pyrophosphate moieties to form squalene, which is the precursor of all steroids. Secondly, squalene is converted into lanosterol by the consecutive action of the squalene epoxidase erg1 and the lanosterol synthase erg7. The lanosterol 14-alpha-demethylase erg11/cyp1 catalyzes C14-demethylation of lanosterol to produce 4,4'-dimethyl cholesta-8,14,24-triene-3-beta-ol. In the next steps, a complex process involving various demethylation, reduction and desaturation reactions catalyzed by the C-14 reductase erg24 and the C-4 demethylation complex erg25-erg26-erg27 leads to the production of zymosterol. Erg28 likely functions in the C-4 demethylation complex reaction by tethering erg26 and Erg27 to the endoplasmic reticulum or to facilitate interaction between these proteins. Then, the sterol 24-C-methyltransferase erg6 catalyzes the methyl transfer from S-adenosyl-methionine to the C-24 of zymosterol to form fecosterol. The C-8 sterol isomerase erg2 catalyzes the reaction which results in unsaturation at C-7 in the B ring of sterols and thus converts fecosterol to episterol. The sterol-C5-desaturases erg31 and erg32 then catalyze the introduction of a C-5 double bond in the B ring to produce 5-dehydroepisterol. The C-22 sterol desaturase erg5 further converts 5-dehydroepisterol into ergosta-5,7,22,24(28)-tetraen-3beta-ol by forming the C-22(23) double bond in the sterol side chain. Finally, ergosta-5,7,22,24(28)-tetraen-3beta-ol is substrate of the C-24(28) sterol reductase erg4 to produce ergosterol. In the genus Schizosaccharomyces, a second route exists between lanosterol and fecosterol, via the methylation of lanosterol to eburicol by erg6, followed by C14-demethylation by erg11/cyp1 and C4-demethylation by the demethylation complex erg25-erg26-erg27. Its function is as follows. Extends the chronological lifespan when overexpressed. In Schizosaccharomyces pombe (strain 972 / ATCC 24843) (Fission yeast), this protein is Ergosterol biosynthetic protein 28.